A 71-amino-acid polypeptide reads, in one-letter code: Small ribosomal subunit protein eS17 (71 aa).

This sequence belongs to the eukaryotic ribosomal protein eS17 family.

The chain is Small ribosomal subunit protein eS17 from Pyrobaculum aerophilum (strain ATCC 51768 / DSM 7523 / JCM 9630 / CIP 104966 / NBRC 100827 / IM2).